Reading from the N-terminus, the 375-residue chain is Probable UDP-N-acetylglucosamine 2-epimerase (375 aa).

It belongs to the UDP-N-acetylglucosamine 2-epimerase family.

The protein localises to the cytoplasm. It carries out the reaction UDP-N-acetyl-alpha-D-glucosamine = UDP-N-acetyl-alpha-D-mannosamine. It functions in the pathway glycan metabolism; exopolysaccharide EPS I biosynthesis. Functionally, may be involved in synthesis of N-acetyltrideoxygalactose, a component of exopolysaccharide EPS I which functions as a virulence factor. This is Probable UDP-N-acetylglucosamine 2-epimerase (epsC) from Ralstonia nicotianae (strain ATCC BAA-1114 / GMI1000) (Ralstonia solanacearum).